Reading from the N-terminus, the 178-residue chain is MSKILAKLPTEMRGELKDPLGEIYTDTDELLADAGDPLVAVGDIVTYHLLEAGHRPAAAIVDGKTERERVERKVLSAIEEFDERIDVANPQSTITDDLLEALSTALDRPDPTVVVVDGEEDLASLPAVVAAPVGASVVYGQPGEGMVLVHVTDETQAECRDIIERMQSDYSQIESILS.

D43, I44, V45, D62, K64, and E120 together coordinate GTP.

It belongs to the GTP-dependent DPCK family.

The catalysed reaction is 3'-dephospho-CoA + GTP = GDP + CoA + H(+). Its pathway is cofactor biosynthesis; coenzyme A biosynthesis. Catalyzes the GTP-dependent phosphorylation of the 3'-hydroxyl group of dephosphocoenzyme A to form coenzyme A (CoA). The sequence is that of GTP-dependent dephospho-CoA kinase from Natronomonas pharaonis (strain ATCC 35678 / DSM 2160 / CIP 103997 / JCM 8858 / NBRC 14720 / NCIMB 2260 / Gabara) (Halobacterium pharaonis).